The sequence spans 252 residues: Aquaporin TIP4-4 (252 aa).

The next 2 membrane-spanning stretches (helical) occupy residues 20–40 and 53–73; these read AVLA…GSAM and VVGL…MVSA. The NPA 1 motif lies at 83–85; that stretch reads NPA. Helical transmembrane passes span 105–125, 143–163, and 168–188; these read VAAQ…LAVA, GVLM…ATVV, and AVGG…VLAG. The NPA 2 signature appears at 197–199; that stretch reads NPA. The helical transmembrane segment at 216-236 threads the bilayer; the sequence is VYWVGPLIGGPLAGLVYDGLF.

It belongs to the MIP/aquaporin (TC 1.A.8) family. TIP (TC 1.A.8.10) subfamily.

Its subcellular location is the vacuole membrane. Functionally, aquaporins facilitate the transport of water and small neutral solutes across cell membranes. The polypeptide is Aquaporin TIP4-4 (TIP4-4) (Zea mays (Maize)).